The chain runs to 77 residues: Large ribosomal subunit protein eL14 (77 aa).

The protein belongs to the eukaryotic ribosomal protein eL14 family.

This is Large ribosomal subunit protein eL14 from Methanococcus vannielii (strain ATCC 35089 / DSM 1224 / JCM 13029 / OCM 148 / SB).